A 91-amino-acid chain; its full sequence is Small ribosomal subunit protein uS19 (91 aa).

Belongs to the universal ribosomal protein uS19 family.

Protein S19 forms a complex with S13 that binds strongly to the 16S ribosomal RNA. The sequence is that of Small ribosomal subunit protein uS19 from Ectopseudomonas mendocina (strain ymp) (Pseudomonas mendocina).